Reading from the N-terminus, the 272-residue chain is Ribosomal RNA small subunit methyltransferase A (272 aa).

N18, L20, G45, E66, D91, and N113 together coordinate S-adenosyl-L-methionine.

It belongs to the class I-like SAM-binding methyltransferase superfamily. rRNA adenine N(6)-methyltransferase family. RsmA subfamily.

Its subcellular location is the cytoplasm. It catalyses the reaction adenosine(1518)/adenosine(1519) in 16S rRNA + 4 S-adenosyl-L-methionine = N(6)-dimethyladenosine(1518)/N(6)-dimethyladenosine(1519) in 16S rRNA + 4 S-adenosyl-L-homocysteine + 4 H(+). Functionally, specifically dimethylates two adjacent adenosines (A1518 and A1519) in the loop of a conserved hairpin near the 3'-end of 16S rRNA in the 30S particle. May play a critical role in biogenesis of 30S subunits. In Proteus mirabilis (strain HI4320), this protein is Ribosomal RNA small subunit methyltransferase A.